A 100-amino-acid polypeptide reads, in one-letter code: Apolipoprotein C-II (100 aa).

The N-terminal stretch at M1–G25 is a signal peptide. Residues A65–I73 are lipid binding. The lipoprotein lipase cofactor stretch occupies residues G77–Q100.

The protein belongs to the apolipoprotein C2 family. Proapolipoprotein C-II is synthesized as a sialic acid containing glycoprotein which is subsequently desialylated prior to its proteolytic processing. In terms of processing, proapolipoprotein C-II, the major form found in plasma undergoes proteolytic cleavage of its N-terminal hexapeptide to generate apolipoprotein C-II, which occurs as the minor form in plasma. Liver.

The protein localises to the secreted. In terms of biological role, component of chylomicrons, very low-density lipoproteins (VLDL), low-density lipoproteins (LDL), and high-density lipoproteins (HDL) in plasma. Plays an important role in lipoprotein metabolism as an activator of lipoprotein lipase. Both proapolipoprotein C-II and apolipoprotein C-II can activate lipoprotein lipase. The sequence is that of Apolipoprotein C-II (APOC2) from Cavia porcellus (Guinea pig).